A 125-amino-acid polypeptide reads, in one-letter code: UPF0102 protein CCNA_00142 (125 aa).

It belongs to the UPF0102 family.

In Caulobacter vibrioides (strain NA1000 / CB15N) (Caulobacter crescentus), this protein is UPF0102 protein CCNA_00142.